The chain runs to 417 residues: Phosphoglycerate kinase (417 aa).

Residues Val-23, Asp-24, Phe-25, Asn-26, Gln-38, Arg-39, Ser-62, His-63, Gly-65, Arg-66, Leu-121, Arg-122, His-169, and Arg-170 each contribute to the (2R)-3-phosphoglycerate site. Residue Gly-213 coordinates ADP. Gly-213 lines the CDP pocket. AMP-binding residues include Ala-214 and Lys-215. An ATP-binding site is contributed by Ala-214. Position 214 (Ala-214) interacts with Mg(2+). CDP is bound at residue Asp-218. Asp-218 serves as a coordination point for Mg(2+). Position 219 (Lys-219) interacts with AMP. Lys-219 contributes to the ATP binding site. Gly-237 contributes to the ADP binding site. CDP is bound at residue Gly-237. Positions 238 and 312 each coordinate AMP. 2 residues coordinate ATP: Gly-238 and Gly-312. CDP is bound by residues Gly-337 and Phe-342. Phe-342 contacts ADP. Glu-343 is an AMP binding site. The ATP site is built by Glu-343, Asp-374, and Thr-375. Asp-374 serves as a coordination point for Mg(2+).

The protein belongs to the phosphoglycerate kinase family. In terms of assembly, monomer. Mg(2+) is required as a cofactor.

The protein localises to the cytoplasm. It is found in the secreted. Its subcellular location is the cell wall. The protein resides in the mitochondrion. It carries out the reaction (2R)-3-phosphoglycerate + ATP = (2R)-3-phospho-glyceroyl phosphate + ADP. The protein operates within carbohydrate degradation; glycolysis; pyruvate from D-glyceraldehyde 3-phosphate: step 2/5. Catalyzes one of the two ATP producing reactions in the glycolytic pathway via the reversible conversion of 1,3-diphosphoglycerate to 3-phosphoglycerate. Both L- and D- forms of purine and pyrimidine nucleotides can be used as substrates, but the activity is much lower on pyrimidines. Negatively regulates the biosynthesis of acetyl-CoA from pyruvate in the mitochondrion. The polypeptide is Phosphoglycerate kinase (PGK1) (Candida albicans (strain SC5314 / ATCC MYA-2876) (Yeast)).